The following is a 514-amino-acid chain: 1-pyrroline-5-carboxylate dehydrogenase (514 aa).

Catalysis depends on residues Glu286 and Cys320.

This sequence belongs to the aldehyde dehydrogenase family. RocA subfamily.

It catalyses the reaction L-glutamate 5-semialdehyde + NAD(+) + H2O = L-glutamate + NADH + 2 H(+). It participates in amino-acid degradation; L-proline degradation into L-glutamate; L-glutamate from L-proline: step 2/2. The chain is 1-pyrroline-5-carboxylate dehydrogenase from Staphylococcus epidermidis (strain ATCC 12228 / FDA PCI 1200).